We begin with the raw amino-acid sequence, 316 residues long: MLVVLGLLTSFLSFLYVIAPSIRKFFAGGVCRTDVQLFGKVVVITGANTGIGKETARELARRGARVYIACRDVLKGESAASEIQADTKNSQVLVRKLDLSDTKSIRAFAEGFLAEEKQLHILINNAGVMLCPYSKTADGFETHLAVNHLGHFLLTHLLLGRLKESAPARVVNLSSVAHHLGKIRFHDLQGDKYYNLGFAYCHSKLANVLFTRELAKRLKGTGVTTYAVHPGIVRSKLVRHSFLLCLLWRLFSPFLKTTWEGAQTSLHCALAEGLEPLSGKYFSDCKKTWVSPRARNNKTAERLWNVSCELLGIRWE.

46–52 (GANTGIG) contacts NADP(+). Ser175 contacts substrate. Tyr200 (proton acceptor) is an active-site residue.

This sequence belongs to the short-chain dehydrogenases/reductases (SDR) family. As to expression, expressed in the retina.

The enzyme catalyses all-trans-retinol + NADP(+) = all-trans-retinal + NADPH + H(+). It catalyses the reaction 11-cis-retinol + NADP(+) = 11-cis-retinal + NADPH + H(+). The catalysed reaction is 9-cis-retinol + NADP(+) = 9-cis-retinal + NADPH + H(+). It carries out the reaction a 4-hydroxynonen-1-ol + NADP(+) = a 4-hydroxynonenal + NADPH + H(+). The enzyme catalyses (E)-non-2-en-1-ol + NADP(+) = (E)-non-2-enal + NADPH + H(+). It catalyses the reaction (Z)-non-6-en-1-ol + NADP(+) = (Z)-non-6-enal + NADPH + H(+). The catalysed reaction is nonan-1-ol + NADP(+) = nonanal + NADPH + H(+). It participates in cofactor metabolism; retinol metabolism. Retinoids dehydrogenase/reductase with a clear preference for NADP. Displays high activity towards 9-cis, 11-cis and all-trans-retinal. Shows very weak activity towards 13-cis-retinol. Also exhibits activity, albeit with lower affinity than for retinaldehydes, towards lipid peroxidation products (C9 aldehydes) such as 4-hydroxynonenal and trans-2-nonenal. May play an important function in photoreceptor cells to detoxify 4-hydroxynonenal and potentially other toxic aldehyde products resulting from lipid peroxidation. Has no dehydrogenase activity towards steroids. This Bos taurus (Bovine) protein is Retinol dehydrogenase 12 (RDH12).